Reading from the N-terminus, the 87-residue chain is MKTLILLSALVLLALQVQADPIQEAEEETKTEEQPADEDQDVSVSFEGPEASAVQDLRVRRTLQCSCRRVCRNTCSCIRLSRSTYAS.

An N-terminal signal peptide occupies residues 1–19 (MKTLILLSALVLLALQVQA). Residues 20-56 (DPIQEAEEETKTEEQPADEDQDVSVSFEGPEASAVQD) constitute a propeptide that is removed on maturation. Over residues 23 to 41 (QEAEEETKTEEQPADEDQD) the composition is skewed to acidic residues. The interval 23 to 43 (QEAEEETKTEEQPADEDQDVS) is disordered.

Belongs to the alpha-defensin family. Antiparallel homodimer; disulfide-linked. As to expression, specifically expressed in small intestine (jejunum and ileum). Probably expressed by Paneth cells at the base of intestinal crypts. Coexpressed with MMP7 in small intestine.

Its subcellular location is the secreted. Intestinal defense peptide. Has potent antibacterial activity against Gram-negative bacteria E.coli O157:H7, S.typhimurium DT104, and K.pneumoniae; and against Gram-positive bacteria S.aureus, methicillin-resistant S.aureus and L.monocytogenes. Remains active in the presence of NaCl and Mg(2+). Probably functions by disrupting bacterial membrane integrity. However, does not show cytotoxic activity towards human intestinal cells. This Rattus norvegicus (Rat) protein is Defensin alpha-like protein 1.